Consider the following 288-residue polypeptide: MASLKEIDTRIKSTKKMKQITKAMNMVSSSKLRRAEKNTKQFTPYMDKMQDAITAVAGASSNTNHPMLRPRKITRSGYLVITSDKGLAGAYSANVLKKLITDIEAKHQDSSEYSIVVLGQQGVDFLKNRGYDIEYSQVDVPDQPSFKSVQALANHAIDLYSEEEIDELNIYYSHYVSVLENKPTSRQVLPLSQEDSSKGHGHLSSYEFEPDKESILSVILPQYVESLIYGTILDAKASEHATRMTAMKNATDNATELIDDLSLEYNRARQAEITQQITEIVGGSAALE.

Belongs to the ATPase gamma chain family. F-type ATPases have 2 components, CF(1) - the catalytic core - and CF(0) - the membrane proton channel. CF(1) has five subunits: alpha(3), beta(3), gamma(1), delta(1), epsilon(1). CF(0) has three main subunits: a, b and c.

It localises to the cell membrane. Functionally, produces ATP from ADP in the presence of a proton gradient across the membrane. The gamma chain is believed to be important in regulating ATPase activity and the flow of protons through the CF(0) complex. This is ATP synthase gamma chain from Staphylococcus aureus (strain Mu3 / ATCC 700698).